Reading from the N-terminus, the 63-residue chain is Large ribosomal subunit protein uL29 (63 aa).

It belongs to the universal ribosomal protein uL29 family.

This Stutzerimonas stutzeri (strain A1501) (Pseudomonas stutzeri) protein is Large ribosomal subunit protein uL29.